The chain runs to 327 residues: MIPETLNPLNYYTSLVPDLIPAATVPIIILICVLFLIWNHEGTSSIPGPGYCMGIGPLISHGRFLWMGVGNACNYYNKTYGEFVRVWFSGEETFIISYFDAWQALLLKPDIFFKISWLCKKYEEAAKDLKGAMEILIEQKRQKLSTVEKLDEHMDFASQLIFAQNRGDLTAENVNQCVLEMMIAAPDTLSVTLFIMLILIAEHPTVEEKMMREIETVMGDRDVQSDDMPNLKIVENFIYESMRYQPVVDLIMRKALQDDVIDGYPVKKGTNIILNIGRMHKLEFFPKPNEFSLENFEKNVPSRYFQPFGFGPRGCVGKFIAMVMMKA.

Position 315 (cysteine 315) interacts with heme.

It belongs to the cytochrome P450 family. The cofactor is heme.

It is found in the membrane. It carries out the reaction testosterone + 3 reduced [NADPH--hemoprotein reductase] + 3 O2 = 17beta-estradiol + formate + 3 oxidized [NADPH--hemoprotein reductase] + 4 H2O + 4 H(+). The catalysed reaction is androst-4-ene-3,17-dione + 3 reduced [NADPH--hemoprotein reductase] + 3 O2 = estrone + formate + 3 oxidized [NADPH--hemoprotein reductase] + 4 H2O + 4 H(+). In terms of biological role, catalyzes the formation of aromatic C18 estrogens from C19 androgens. In Coturnix japonica (Japanese quail), this protein is Aromatase (CYP19A1).